Consider the following 183-residue polypeptide: MDIDPYKEFGASVELLSFLPSDFFPSVRDLLDTASALYREALESPEHCSPHHTALRQATLCWGELMNLATWVGSNLADPASRDLVVNYVNVNMGLKFRQLLWFHISCLTFGRETVLEYLVSFGVWIRTPPAYRPPNAPILSTLPETTVVRRRGRSPRRRTPSPRRRRSQSPRRRRSKSRESQC.

A disordered region spans residues 136–183; it reads NAPILSTLPETTVVRRRGRSPRRRTPSPRRRRSQSPRRRRSKSRESQC. The span at 149–177 shows a compositional bias: basic residues; it reads VRRRGRSPRRRTPSPRRRRSQSPRRRRSK. Phosphoserine; by host occurs at positions 155, 162, and 170. One copy of the 1; half-length repeat lies at 155 to 160; the sequence is SPRRRT. The segment at 155–176 is 3 X 7 AA repeats of S-P-R-R-R-[PR]-S; that stretch reads SPRRRTPSPRRRRSQSPRRRRS. The Bipartite nuclear localization signal signature appears at 158–175; the sequence is RRTPSPRRRRSQSPRRRR. 2 repeat units span residues 162–168 and 170–176. Residues 177–183 form an RNA binding region; the sequence is KSRESQC.

This sequence belongs to the orthohepadnavirus core antigen family. In terms of assembly, homodimerizes, then multimerizes. Interacts with cytosol exposed regions of viral L glycoprotein present in the reticulum-to-Golgi compartment. Interacts with human FLNB. Phosphorylated form interacts with host importin alpha; this interaction depends on the exposure of the NLS, which itself depends upon genome maturation and/or phosphorylation of the capsid protein. Interacts with host NUP153. In terms of processing, phosphorylated by host SRPK1, SRPK2, and maybe protein kinase C or GAPDH. Phosphorylation is critical for pregenomic RNA packaging. Protein kinase C phosphorylation is stimulated by HBx protein and may play a role in transport of the viral genome to the nucleus at the late step during the viral replication cycle.

The protein localises to the virion. It localises to the host cytoplasm. In terms of biological role, self assembles to form an icosahedral capsid. Most capsids appear to be large particles with an icosahedral symmetry of T=4 and consist of 240 copies of capsid protein, though a fraction forms smaller T=3 particles consisting of 180 capsid proteins. Entering capsids are transported along microtubules to the nucleus. Phosphorylation of the capsid is thought to induce exposure of nuclear localization signal in the C-terminal portion of the capsid protein that allows binding to the nuclear pore complex via the importin (karyopherin-) alpha and beta. Capsids are imported in intact form through the nuclear pore into the nuclear basket, where it probably binds NUP153. Only capsids that contain the mature viral genome can release the viral DNA and capsid protein into the nucleoplasm. Immature capsids get stuck in the basket. Capsids encapsulate the pre-genomic RNA and the P protein. Pre-genomic RNA is reverse-transcribed into DNA while the capsid is still in the cytoplasm. The capsid can then either be directed to the nucleus, providing more genomes for transcription, or bud through the endoplasmic reticulum to provide new virions. This is Capsid protein from Hepatitis B virus genotype C subtype ar (isolate Japan/S-207/1988) (HBV-C).